Here is a 161-residue protein sequence, read N- to C-terminus: 2-C-methyl-D-erythritol 2,4-cyclodiphosphate synthase (161 aa).

Positions 11 and 13 each coordinate a divalent metal cation. 4-CDP-2-C-methyl-D-erythritol 2-phosphate-binding positions include 11–13 (DIH) and 37–38 (HS). H45 provides a ligand contact to a divalent metal cation. Residues 59–61 (DIG), 135–138 (TTNE), and R145 each bind 4-CDP-2-C-methyl-D-erythritol 2-phosphate.

It belongs to the IspF family. In terms of assembly, homotrimer. It depends on a divalent metal cation as a cofactor.

It carries out the reaction 4-CDP-2-C-methyl-D-erythritol 2-phosphate = 2-C-methyl-D-erythritol 2,4-cyclic diphosphate + CMP. It functions in the pathway isoprenoid biosynthesis; isopentenyl diphosphate biosynthesis via DXP pathway; isopentenyl diphosphate from 1-deoxy-D-xylulose 5-phosphate: step 4/6. In terms of biological role, involved in the biosynthesis of isopentenyl diphosphate (IPP) and dimethylallyl diphosphate (DMAPP), two major building blocks of isoprenoid compounds. Catalyzes the conversion of 4-diphosphocytidyl-2-C-methyl-D-erythritol 2-phosphate (CDP-ME2P) to 2-C-methyl-D-erythritol 2,4-cyclodiphosphate (ME-CPP) with a corresponding release of cytidine 5-monophosphate (CMP). The polypeptide is 2-C-methyl-D-erythritol 2,4-cyclodiphosphate synthase (Cyanothece sp. (strain PCC 7425 / ATCC 29141)).